Here is a 444-residue protein sequence, read N- to C-terminus: Deoxyguanosinetriphosphate triphosphohydrolase-like protein (444 aa).

Residues 1-26 (MTESLWHERRLTEEKKRRNDHRSPYQ) form a disordered region. An HD domain is found at 59–250 (RLTHSLEVSQ…MELADDIAYA (192 aa)).

Belongs to the dGTPase family. Type 2 subfamily.

The chain is Deoxyguanosinetriphosphate triphosphohydrolase-like protein from Shewanella sediminis (strain HAW-EB3).